The following is a 452-amino-acid chain: Phosphoglucosamine mutase (452 aa).

S97 acts as the Phosphoserine intermediate in catalysis. S97, D236, D238, and D240 together coordinate Mg(2+). S97 is subject to Phosphoserine.

This sequence belongs to the phosphohexose mutase family. Mg(2+) serves as cofactor. Activated by phosphorylation.

The catalysed reaction is alpha-D-glucosamine 1-phosphate = D-glucosamine 6-phosphate. In terms of biological role, catalyzes the conversion of glucosamine-6-phosphate to glucosamine-1-phosphate. The polypeptide is Phosphoglucosamine mutase (Prochlorococcus marinus (strain MIT 9515)).